Reading from the N-terminus, the 427-residue chain is Glutamate-1-semialdehyde 2,1-aminomutase (427 aa).

Residue Lys265 is modified to N6-(pyridoxal phosphate)lysine.

Belongs to the class-III pyridoxal-phosphate-dependent aminotransferase family. HemL subfamily. Homodimer. The cofactor is pyridoxal 5'-phosphate.

Its subcellular location is the cytoplasm. It catalyses the reaction (S)-4-amino-5-oxopentanoate = 5-aminolevulinate. It functions in the pathway porphyrin-containing compound metabolism; protoporphyrin-IX biosynthesis; 5-aminolevulinate from L-glutamyl-tRNA(Glu): step 2/2. In Burkholderia vietnamiensis (strain G4 / LMG 22486) (Burkholderia cepacia (strain R1808)), this protein is Glutamate-1-semialdehyde 2,1-aminomutase.